A 277-amino-acid chain; its full sequence is Shikimate dehydrogenase (NADP(+)) (277 aa).

Shikimate-binding positions include serine 18–serine 20 and threonine 65. Lysine 69 serves as the catalytic Proton acceptor. Glutamate 81 provides a ligand contact to NADP(+). Shikimate contacts are provided by asparagine 90 and aspartate 106. NADP(+)-binding positions include glycine 130–alanine 134, asparagine 154–lysine 159, and methionine 217. Residue tyrosine 219 participates in shikimate binding. Glycine 241 contributes to the NADP(+) binding site.

Belongs to the shikimate dehydrogenase family. As to quaternary structure, homodimer.

The enzyme catalyses shikimate + NADP(+) = 3-dehydroshikimate + NADPH + H(+). Its pathway is metabolic intermediate biosynthesis; chorismate biosynthesis; chorismate from D-erythrose 4-phosphate and phosphoenolpyruvate: step 4/7. In terms of biological role, involved in the biosynthesis of the chorismate, which leads to the biosynthesis of aromatic amino acids. Catalyzes the reversible NADPH linked reduction of 3-dehydroshikimate (DHSA) to yield shikimate (SA). The chain is Shikimate dehydrogenase (NADP(+)) from Vibrio vulnificus (strain CMCP6).